A 452-amino-acid polypeptide reads, in one-letter code: UDP-N-acetylmuramate--L-alanine ligase (452 aa).

Gly-121–Thr-127 is a binding site for ATP.

This sequence belongs to the MurCDEF family.

It is found in the cytoplasm. The enzyme catalyses UDP-N-acetyl-alpha-D-muramate + L-alanine + ATP = UDP-N-acetyl-alpha-D-muramoyl-L-alanine + ADP + phosphate + H(+). Its pathway is cell wall biogenesis; peptidoglycan biosynthesis. Its function is as follows. Cell wall formation. The protein is UDP-N-acetylmuramate--L-alanine ligase of Christiangramia forsetii (strain DSM 17595 / CGMCC 1.15422 / KT0803) (Gramella forsetii).